Here is a 363-residue protein sequence, read N- to C-terminus: Protein TAX-1 (363 aa).

The interval 129-363 (RYGNAEEILS…IPFRGVAAEQ (235 aa)) is required for localization to the flagellum and for flagellar motility. 2 TPR repeats span residues 157 to 190 (AELHQTFGLLYAADNKLDVSVKHLTCATYYLSVM) and 199 to 232 (TFAYFDLANVFATKACMEAAMALYDTVKNIWLKH).

In terms of assembly, interacts with TTC29.

The protein resides in the cytoplasm. It is found in the cytoskeleton. It localises to the flagellum axoneme. Its function is as follows. Required for flagellum motility. The chain is Protein TAX-1 from Trypanosoma brucei brucei (strain 927/4 GUTat10.1).